The chain runs to 267 residues: L-aspartate dehydrogenase 2 (267 aa).

Alanine 123 and asparagine 189 together coordinate NAD(+). Histidine 219 is an active-site residue.

Belongs to the L-aspartate dehydrogenase family.

The catalysed reaction is L-aspartate + NADP(+) + H2O = oxaloacetate + NH4(+) + NADPH + H(+). It catalyses the reaction L-aspartate + NAD(+) + H2O = oxaloacetate + NH4(+) + NADH + H(+). It functions in the pathway cofactor biosynthesis; NAD(+) biosynthesis; iminoaspartate from L-aspartate (dehydrogenase route): step 1/1. Functionally, specifically catalyzes the NAD or NADP-dependent dehydrogenation of L-aspartate to iminoaspartate. The sequence is that of L-aspartate dehydrogenase 2 from Bordetella pertussis (strain Tohama I / ATCC BAA-589 / NCTC 13251).